Reading from the N-terminus, the 336-residue chain is UDP-3-O-acylglucosamine N-acyltransferase (336 aa).

The Proton acceptor role is filled by His233.

The protein belongs to the transferase hexapeptide repeat family. LpxD subfamily. As to quaternary structure, homotrimer.

It carries out the reaction a UDP-3-O-[(3R)-3-hydroxyacyl]-alpha-D-glucosamine + a (3R)-hydroxyacyl-[ACP] = a UDP-2-N,3-O-bis[(3R)-3-hydroxyacyl]-alpha-D-glucosamine + holo-[ACP] + H(+). The protein operates within bacterial outer membrane biogenesis; LPS lipid A biosynthesis. Functionally, catalyzes the N-acylation of UDP-3-O-acylglucosamine using 3-hydroxyacyl-ACP as the acyl donor. Is involved in the biosynthesis of lipid A, a phosphorylated glycolipid that anchors the lipopolysaccharide to the outer membrane of the cell. The polypeptide is UDP-3-O-acylglucosamine N-acyltransferase (Helicobacter pylori (strain J99 / ATCC 700824) (Campylobacter pylori J99)).